A 1337-amino-acid polypeptide reads, in one-letter code: Activated Cdc42 kinase-like (1337 aa).

At Ser71 the chain carries Phosphoserine. A Protein kinase domain is found at Ile133 to Met399. ATP is bound by residues Leu139–Val147 and Lys164. Asp260 acts as the Proton acceptor in catalysis. Phosphotyrosine occurs at positions 291 and 292. The SH3 domain maps to Met399 to Glu460. One can recognise a CRIB domain in the interval Ile488–Gly502. Residues Ser714–Val739 form a disordered region. Ser764 and Ser778 each carry phosphoserine. Residues Arg786–Lys822 are disordered. Polar residues predominate over residues Ser805 to Asn815. A phosphoserine mark is found at Ser831, Ser918, and Ser924. Disordered stretches follow at residues Ala906–Lys969 and Pro1024–Gly1045. A compositionally biased stretch (pro residues) spans Pro947–Pro957.

It belongs to the protein kinase superfamily. Tyr protein kinase family.

The catalysed reaction is L-tyrosyl-[protein] + ATP = O-phospho-L-tyrosyl-[protein] + ADP + H(+). Likely to act as a downstream effector of Cdc42 during dorsal closure, acting in a kinase independent manner with the other ACK family member Ack to positively regulate expression of the myosin zip by promoting the endocytosis of Egfr in the amnioserosa (AS). The sequence is that of Activated Cdc42 kinase-like from Drosophila melanogaster (Fruit fly).